We begin with the raw amino-acid sequence, 469 residues long: Mitochondrial adenyl nucleotide antiporter SLC25A25 (469 aa).

The interval 1–165 is regulatory N-terminal domain; it reads MLCLCLYVPV…LYWKHSTIFD (165 aa). Residues 1 to 189 lie on the Mitochondrial intermembrane side of the membrane; it reads MLCLCLYVPV…ERQTGMWWRH (189 aa). EF-hand domains follow at residues 47–80, 78–113, and 114–149; these read TYRQWKQKIVQAGDKDLDGQLDFEEFVHYLQDHE, DHEKKLRLVFKSLDKKNDGRIDAQEIMQSLRDLGVK, and ISEQQAEKILKSMDKNGTMTIDWNEWRDYHLLHPVE. Residues Asp-60, Asp-62, Asp-64, Gln-66, and Glu-71 each coordinate Ca(2+). The tract at residues 151 to 160 is linker region; it reads IPEIILYWKH. A C-terminal transmembrane transporter domain region spans residues 166–469; that stretch reads VGENLTVPDE…LKITLGVQSR (304 aa). Solcar repeat units lie at residues 184 to 270, 278 to 363, and 375 to 463; these read GMWW…IKRL, LRIH…LKNA, and PGVF…LKIT. A helical membrane pass occupies residues 190–207; the sequence is LVAGGGAGAVSRTCTAPL. Topologically, residues 208–244 are mitochondrial matrix; it reads DRLKVLMQVHASRSNNMGIVGGFTQMIREGGARSLWR. A helical transmembrane segment spans residues 245 to 264; that stretch reads GNGINVLKIAPESAIKFMAY. Residues 265 to 287 are Mitochondrial intermembrane-facing; it reads EQIKRLVGSDQETLRIHERLVAG. Residues 288–301 form a helical membrane-spanning segment; sequence SLAGAIAQSSIYPM. Over 302 to 337 the chain is Mitochondrial matrix; sequence EVLKTRMALRKTGQYSGMLDCARRILAREGVAAFYK. The helical transmembrane segment at 338–357 threads the bilayer; it reads GYVPNMLGIIPYAGIDLAVY. Residues 358–380 lie on the Mitochondrial intermembrane side of the membrane; it reads ETLKNAWLQHYAVNSADPGVFVL. A helical membrane pass occupies residues 381–398; the sequence is LACGTMSSTCGQLASYPL. At 399-437 the chain is on the mitochondrial matrix side; that stretch reads ALVRTRMQAQASIEGAPEVTMSSLFKHILRTEGAFGLYR. Residues 438–457 form a helical membrane-spanning segment; the sequence is GLAPNFMKVIPAVSISYVVY. Residues 458-469 lie on the Mitochondrial intermembrane side of the membrane; the sequence is ENLKITLGVQSR.

The protein belongs to the mitochondrial carrier (TC 2.A.29) family. As to expression, widely expressed. Expressed in fetal and adult liver, skeletal muscle, testis, ovary, hippocampus and caudate nucleus. In terms of tissue distribution, expressed in all tissues tested. Expression is restricted to kidney and lung.

It is found in the mitochondrion inner membrane. It catalyses the reaction Mg(2+)(out) + phosphate(in) + ATP(out) = Mg(2+)(in) + phosphate(out) + ATP(in). Its activity is regulated as follows. Activated by an increase in cytosolic calcium levels that induce a conformational change of the N-terminal regulatory domain, uncapping the channel and allowing transport. Its function is as follows. Electroneutral antiporter that most probably mediates the transport of adenyl nucleotides through the inner mitochondrial membrane. Originally identified as an ATP-magnesium/inorganic phosphate antiporter, it could have a broader specificity for adenyl nucleotides. By regulating the mitochondrial matrix adenyl nucleotide pool could adapt to changing cellular energetic demands and indirectly regulate adenyl nucleotide-dependent metabolic pathways. In Homo sapiens (Human), this protein is Mitochondrial adenyl nucleotide antiporter SLC25A25.